Here is a 1040-residue protein sequence, read N- to C-terminus: MQVLPPGRTGGPSRLFIMRPVATTLLMVAILLAGIIGYRFLPVSALPEVDYPTIQVVTLYPGASPDVVTSAITAPLERQFGQMSGLKQMSSQSSGGASVVTLQFQLTLPLDVAEQEVQAAINAATNLLPSDLPNPPVYSKVNPADPPIMTLAVTSSAIPMTQVEDMVETRVAQKISQVSGVGLVTLAGGQRPAVRVKLNAQAIAALGLTSETVRTAITSANVNSAKGSLDGPARAVTLSANDQMQSAEDYRRLIIAYQNGAPIRLGDVASVEQGAENSWLGAWANQQRAIVMNVQRQPGANIIDTADSIRQMLPQLTESLPKSVKVQVLSDRTTNIRASVRDTQFELMLAIALVVMIIYLFLRNVPATIIPGVAVPLSLVGTFAVMVFLDFSINNLTLMALTIATGFVVDDAIVVIENISRYIEKGEKPLAAALKGAGEIGFTIISLTFSLIAVLIPLLFMGDIVGRLFREFAVTLAVAILISAVVSLTLTPMMCARMLSHESLRKQNRFSRASERFFERVIAVYGRWLSRVLNHPWLTLGVALSTLALSIILWVFIPKGFFPIQDNGIIQGTLQAPQSVSFASMAERQRQVASIILKDPAVESLTSFVGVDGTNPALNSARLQINLKPLDERDDRVQTVISRLQQAVDGVPGVALYLQPTQDLTIDTTVSRTQYQFTLQANSLEALSTWVPPLLSRLQAQPQLADVSSDWQDKGLAAYIKVDRDSASRLGISMADVDNALYNAFGQRLISTIYTQANQYRVVLEQDTEATPGLAALDNIRLTSSDGGIVPLTAIATVEQRFTPLSVNHLDQFPVTTISFNVPDNYSLGEAVDAILAAEQSLDFPTDIRTQFQGSSLAFQSALGSTVWLVVAAVVAMYIVLGVLYESFIHPITILSTLPTAGVGALLALWLAGSELDVIAIIGIILLIGIVKKNAIMMIDFALAAEREQGMPPREAIYQACLLRFRPILMTTLAALLGALPLMLSTGVGAELRRPLGIGMVGGLMLSQVLTLFTTPVIYLLFDRLSLHLKRRFPRQEEEA.

The next 12 membrane-spanning stretches (helical) occupy residues 16–36 (FIMR…AGII), 342–362 (DTQF…YLFL), 369–389 (IIPG…MVFL), 396–416 (LTLM…IVVI), 440–460 (IGFT…PLLF), 472–492 (FAVT…TLTP), 537–557 (WLTL…WVFI), 863–883 (LGST…VLGV), 888–908 (FIHP…ALLA), 911–931 (LAGS…IGIV), 968–988 (ILMT…STGV), and 998–1018 (IGMV…TPVI).

This sequence belongs to the resistance-nodulation-cell division (RND) (TC 2.A.6) family. MdtB subfamily. As to quaternary structure, part of a tripartite efflux system composed of MdtA, MdtB and MdtC. MdtB forms a heteromultimer with MdtC.

It is found in the cell inner membrane. The chain is Multidrug resistance protein MdtB from Klebsiella pneumoniae (strain 342).